We begin with the raw amino-acid sequence, 243 residues long: Ornithine decarboxylase antizyme 3 (243 aa).

3 positions are modified to phosphoserine: S6, S9, and S12.

It belongs to the ODC antizyme family. As to quaternary structure, interacts with ODC1 and thereby sterically blocks ODC homodimerization. Interacts with AZIN2; this interaction disrupts the interaction between the antizyme and ODC1. Interacts with GGN. As to expression, testis specific. Expressed throughout the differentiation process from spermatids to spermatozoa in the inner part of the seminiferous tubules.

It is found in the nucleus. The protein resides in the cytoplasm. Ornithine decarboxylase (ODC) antizyme protein that negatively regulates ODC activity and intracellular polyamine biosynthesis and uptake in response to increased intracellular polyamine levels. Binds to ODC monomers, inhibiting the assembly of the functional ODC homodimers. Does not target the ODC monomers for degradation, which allows a protein synthesis-independent restoration of ODC activity. Stabilizes AZIN2 by interfering with its ubiquitination. Involved in the translocation of AZNI2 from ER-Golgi intermediate compartment (ERGIC) to the cytosol. Probably plays a key role in spermatogenesis by regulating the intracellular concentration of polyamines in haploid germ cells. The protein is Ornithine decarboxylase antizyme 3 (Oaz3) of Mus musculus (Mouse).